The following is an 844-amino-acid chain: Receptor-like protein 49 (844 aa).

Positions 1–31 (MMYSCRERRMITVKWSLCLIFCLSNSILVFA) are cleaved as a signal peptide. The Extracellular segment spans residues 32-803 (KHLCLPDQRD…QDEEKEEEEQ (772 aa)). N59, N95, N112, and N159 each carry an N-linked (GlcNAc...) asparagine glycan. LRR repeat units lie at residues 102 to 126 (QHLQ…GLKG), 136 to 160 (LKYL…LGNL), 161 to 183 (SYLT…SMGN), 185 to 208 (NYLR…LGNL), 209 to 231 (SYLA…SMGN), 242 to 265 (LNSL…NMSS), 266 to 290 (LSKL…LFMI), 292 to 313 (SLVE…NISS), 315 to 339 (SKLQ…IFSP), 345 to 362 (YLDV…VSLP), 363 to 385 (SPIE…LRNQ), 386 to 409 (TKLY…LWSL), 410 to 434 (PELQ…VIQG), 436 to 457 (GELY…LLPV), 458 to 481 (DSMN…ICEL), 482 to 504 (DNLV…CFEN), 506 to 527 (HLYV…EAIS), 528 to 551 (DRLQ…LINC), 553 to 574 (ALEF…WLEL), 575 to 601 (LPNF…SLSF), 602 to 625 (PRLR…YFAP), 665 to 689 (FTIY…ISLL), 690 to 713 (KELI…LSNL), 714 to 737 (SNLQ…LGEL), and 739 to 762 (FLAR…QIQT). N-linked (GlcNAc...) asparagine glycosylation is present at N207. A glycan (N-linked (GlcNAc...) asparagine) is linked at N262. An N-linked (GlcNAc...) asparagine glycan is attached at N310. 2 N-linked (GlcNAc...) asparagine glycosylation sites follow: N374 and N384. An N-linked (GlcNAc...) asparagine glycan is attached at N416. Residues N493, N516, and N550 are each glycosylated (N-linked (GlcNAc...) asparagine). Residues N696 and N712 are each glycosylated (N-linked (GlcNAc...) asparagine). Residue N744 is glycosylated (N-linked (GlcNAc...) asparagine). A helical membrane pass occupies residues 804 to 824 (VFSWIAAAIGYVPGVVCGLTI). Residues 825 to 844 (GHILVSHKRDWFMRIVSLFT) lie on the Cytoplasmic side of the membrane.

This sequence belongs to the RLP family.

It localises to the cell membrane. This is Receptor-like protein 49 from Arabidopsis thaliana (Mouse-ear cress).